A 145-amino-acid chain; its full sequence is Large ribosomal subunit protein uL13 (145 aa).

Belongs to the universal ribosomal protein uL13 family. As to quaternary structure, part of the 50S ribosomal subunit.

Its function is as follows. This protein is one of the early assembly proteins of the 50S ribosomal subunit, although it is not seen to bind rRNA by itself. It is important during the early stages of 50S assembly. This is Large ribosomal subunit protein uL13 from Bacillus licheniformis (strain ATCC 14580 / DSM 13 / JCM 2505 / CCUG 7422 / NBRC 12200 / NCIMB 9375 / NCTC 10341 / NRRL NRS-1264 / Gibson 46).